Reading from the N-terminus, the 492-residue chain is N-succinylglutamate 5-semialdehyde dehydrogenase (492 aa).

220-225 (GSANTG) contributes to the NAD(+) binding site. Active-site residues include glutamate 243 and cysteine 277.

This sequence belongs to the aldehyde dehydrogenase family. AstD subfamily.

The enzyme catalyses N-succinyl-L-glutamate 5-semialdehyde + NAD(+) + H2O = N-succinyl-L-glutamate + NADH + 2 H(+). Its pathway is amino-acid degradation; L-arginine degradation via AST pathway; L-glutamate and succinate from L-arginine: step 4/5. Catalyzes the NAD-dependent reduction of succinylglutamate semialdehyde into succinylglutamate. This Escherichia coli (strain 55989 / EAEC) protein is N-succinylglutamate 5-semialdehyde dehydrogenase.